A 116-amino-acid polypeptide reads, in one-letter code: Large ribosomal subunit protein bL19 (116 aa).

Belongs to the bacterial ribosomal protein bL19 family.

Functionally, this protein is located at the 30S-50S ribosomal subunit interface and may play a role in the structure and function of the aminoacyl-tRNA binding site. This Geobacillus sp. (strain WCH70) protein is Large ribosomal subunit protein bL19.